Consider the following 114-residue polypeptide: Class I hydrophobin 1 (114 aa).

The first 20 residues, 1–20 (MQFTKMSAFATLALATLAAA), serve as a signal peptide directing secretion. Cystine bridges form between Cys-33–Cys-93, Cys-40–Cys-87, Cys-41–Cys-74, and Cys-94–Cys-107.

It belongs to the fungal hydrophobin family. As to quaternary structure, self-assembles to form functional amyloid fibrils called rodlets. Self-assembly into fibrillar rodlets occurs spontaneously at hydrophobic:hydrophilic interfaces and the rodlets further associate laterally to form amphipathic monolayers.

Its subcellular location is the secreted. It is found in the cell wall. Functionally, aerial growth, conidiation, and dispersal of filamentous fungi in the environment rely upon a capability of their secreting small amphipathic proteins called hydrophobins (HPBs) with low sequence identity. Class I can self-assemble into an outermost layer of rodlet bundles on aerial cell surfaces, conferring cellular hydrophobicity that supports fungal growth, development and dispersal; whereas Class II form highly ordered films at water-air interfaces through intermolecular interactions but contribute nothing to the rodlet structure. Pnh1 is a class I hydrophobin that might be involved in the attachment of the hydrophilic wall of hyphae to the hydrophobic surface of wood under inorganic phosphate (Pi)-deficient conditions and enable the mycelium to degrade efficiently the components of wood and to acquire nutrients containing Pi. This Pholiota nameko protein is Class I hydrophobin 1.